Here is a 374-residue protein sequence, read N- to C-terminus: 4-hydroxy-3-methylbut-2-en-1-yl diphosphate synthase (flavodoxin) (374 aa).

[4Fe-4S] cluster contacts are provided by Cys270, Cys273, Cys305, and Glu312.

Belongs to the IspG family. The cofactor is [4Fe-4S] cluster.

The catalysed reaction is (2E)-4-hydroxy-3-methylbut-2-enyl diphosphate + oxidized [flavodoxin] + H2O + 2 H(+) = 2-C-methyl-D-erythritol 2,4-cyclic diphosphate + reduced [flavodoxin]. It functions in the pathway isoprenoid biosynthesis; isopentenyl diphosphate biosynthesis via DXP pathway; isopentenyl diphosphate from 1-deoxy-D-xylulose 5-phosphate: step 5/6. Its function is as follows. Converts 2C-methyl-D-erythritol 2,4-cyclodiphosphate (ME-2,4cPP) into 1-hydroxy-2-methyl-2-(E)-butenyl 4-diphosphate. The protein is 4-hydroxy-3-methylbut-2-en-1-yl diphosphate synthase (flavodoxin) of Cellvibrio japonicus (strain Ueda107) (Pseudomonas fluorescens subsp. cellulosa).